The primary structure comprises 428 residues: Glutamate-1-semialdehyde 2,1-aminomutase (428 aa).

At lysine 265 the chain carries N6-(pyridoxal phosphate)lysine.

Belongs to the class-III pyridoxal-phosphate-dependent aminotransferase family. HemL subfamily. Homodimer. Pyridoxal 5'-phosphate is required as a cofactor.

The protein resides in the cytoplasm. It catalyses the reaction (S)-4-amino-5-oxopentanoate = 5-aminolevulinate. It functions in the pathway porphyrin-containing compound metabolism; protoporphyrin-IX biosynthesis; 5-aminolevulinate from L-glutamyl-tRNA(Glu): step 2/2. The polypeptide is Glutamate-1-semialdehyde 2,1-aminomutase (Methylobacillus flagellatus (strain ATCC 51484 / DSM 6875 / VKM B-1610 / KT)).